Here is a 370-residue protein sequence, read N- to C-terminus: Platelet-derived growth factor D (370 aa).

The N-terminal stretch at 1–23 (MQRLVLVSILLCANFSCYPDTFA) is a signal peptide. Residues 52–170 (REENIQVTSN…PGFKIYYSFV (119 aa)) enclose the CUB domain. Cys109 and Cys131 are oxidised to a cystine. The N-linked (GlcNAc...) asparagine glycan is linked to Asn276. 2 disulfide bridges follow: Cys302–Cys360 and Cys306–Cys362.

Belongs to the PDGF/VEGF growth factor family. As to quaternary structure, homodimer; disulfide-linked. Interacts with PDGFRB homodimers, and with heterodimers formed by PDGFRA and PDGFRB. In terms of processing, activated by proteolytic cleavage. Proteolytic removal of the N-terminal CUB domain releasing the core domain is necessary for unmasking the receptor-binding epitopes of the core domain. Cleavage after Arg-247 or Arg-249 by urokinase plasminogen activator gives rise to the active form. As to expression, expressed at high levels in developing heart, lung, kidney and some muscle derivatives. Moderately expressed in liver, brain and testis. In the kidney, localized to glomerular mesangial cells and vascular smooth muscle cells. Up-regulated in areas of renal fibrosis. In mice with unilateral ureteral obstruction, expressed in interstitial cells at day 4, with an increased to maximal expression at day 14.

The protein localises to the secreted. Functionally, growth factor that plays an essential role in the regulation of embryonic development, cell proliferation, cell migration, survival and chemotaxis. Potent mitogen for cells of mesenchymal origin. Plays an important role in wound healing. Has oncogenic potential and can induce tumor formation. Induces macrophage recruitment, increased interstitial pressure, and blood vessel maturation during angiogenesis. Can initiate events that lead to a mesangial proliferative glomerulonephritis, including influx of monocytes and macrophages and production of extracellular matrix. This is Platelet-derived growth factor D (Pdgfd) from Mus musculus (Mouse).